Consider the following 491-residue polypeptide: UDP-glycosyltransferase 73C1 (491 aa).

UDP-alpha-D-glucose-binding positions include serine 292, 352–354 (SPQ), 369–377 (HCGWNSTLE), and 391–394 (FGDQ).

The protein belongs to the UDP-glycosyltransferase family.

Its function is as follows. Involved in the O-glucosylation of trans-zeatin and dihydrozeatin. Also active in vitro on cis-zeatin, dihydrozeatin-9-N-Glc, and olomoucine. Can detoxify the explosive 2,4,6-trinitrotoluene in plant by forming O- or C-glucose conjugates. This Arabidopsis thaliana (Mouse-ear cress) protein is UDP-glycosyltransferase 73C1 (UGT73C1).